A 102-amino-acid polypeptide reads, in one-letter code: Large ribosomal subunit protein uL24 (102 aa).

It belongs to the universal ribosomal protein uL24 family. Part of the 50S ribosomal subunit.

One of two assembly initiator proteins, it binds directly to the 5'-end of the 23S rRNA, where it nucleates assembly of the 50S subunit. Functionally, one of the proteins that surrounds the polypeptide exit tunnel on the outside of the subunit. This chain is Large ribosomal subunit protein uL24, found in Macrococcus caseolyticus (strain JCSC5402) (Macrococcoides caseolyticum).